Consider the following 601-residue polypeptide: Casbene synthase, chloroplastic (601 aa).

The N-terminal 56 residues, 1–56 (MALPSAAMQSNPEKLNLFHRLSSLPTTSLEYGNNRFPFFSSSAKSHFKKPTQACLS), are a transit peptide targeting the chloroplast. Residues Asp355, Asp359, Asn499, Ser503, and Glu507 each coordinate Mg(2+). Positions 355 to 359 (DDTID) match the DDXXD motif motif.

This sequence belongs to the terpene synthase family. Mg(2+) serves as cofactor.

The protein localises to the plastid. It is found in the chloroplast. It catalyses the reaction (2E,6E,10E)-geranylgeranyl diphosphate = casbene + diphosphate. Functionally, catalyzes the cyclization of geranylgeranyl diphosphate to casbene, a diterpene phytoalexin with antibacterial and antifungal activity. This is Casbene synthase, chloroplastic from Ricinus communis (Castor bean).